Here is a 310-residue protein sequence, read N- to C-terminus: Taste receptor type 2 member 125 (310 aa).

At 1–2 the chain is on the extracellular side; that stretch reads MG. Residues 3–23 traverse the membrane as a helical segment; it reads IVIGIICAFIIIVQFIIGNVA. Residues 24-46 are Cytoplasmic-facing; the sequence is NGFIALVNIIDWVKRRKISLVDQ. A helical transmembrane segment spans residues 47 to 67; that stretch reads IITALAISRIDMLCSTFLIVL. At 68-87 the chain is on the extracellular side; that stretch reads ITSLYPDLNTAVNMVKISNN. A helical membrane pass occupies residues 88–108; it reads IWIVANHFSIWLATSLSIFYF. Residues 109–128 are Cytoplasmic-facing; that stretch reads LKIANFSNYVFLCLRWRLSK. The helical transmembrane segment at 129 to 149 threads the bilayer; sequence VVSVTLLLSLVLLLMNILIMN. Residues 150-185 are Extracellular-facing; it reads MHIDTWSDGFKRNVSFGFRSKNCTRFFKLALLINTT. Asn-162, Asn-171, and Asn-183 each carry an N-linked (GlcNAc...) asparagine glycan. A helical membrane pass occupies residues 186–206; it reads FTCVPFTVSMVAFLLLIFSLW. The Cytoplasmic portion of the chain corresponds to 207–232; sequence RHLKNMQYHAKGSRDPSTAVHIKALQ. A helical transmembrane segment spans residues 233-253; the sequence is MVVVFVLFYTFFFLSLAIQLW. The Extracellular portion of the chain corresponds to 254–261; that stretch reads TSESLEKN. The helical transmembrane segment at 262-282 threads the bilayer; it reads NLFYVTLIITFPSVHSCMLIL. Residues 283-310 lie on the Cytoplasmic side of the membrane; it reads RNSKLRQASLLVLWWLLCRSKDIQTLVP.

The protein belongs to the G-protein coupled receptor T2R family.

The protein resides in the membrane. Functionally, putative taste receptor which may play a role in the perception of bitterness. In Rattus norvegicus (Rat), this protein is Taste receptor type 2 member 125.